The primary structure comprises 475 residues: Ribonuclease Y (475 aa).

Residues glutamate 34 to arginine 73 are disordered. A KH domain is found at threonine 165 to leucine 228. Residues valine 291 to alanine 384 enclose the HD domain.

The protein belongs to the RNase Y family.

Functionally, endoribonuclease that initiates mRNA decay. The protein is Ribonuclease Y of Alkaliphilus metalliredigens (strain QYMF).